The following is a 686-amino-acid chain: ATP-dependent DNA helicase RecG (686 aa).

The tract at residues 50–149 (TVIDLNQAED…GTQTQENADV (100 aa)) is wedge domain. The Helicase ATP-binding domain maps to 279–439 (DLKAPIRMHR…VFGEMDVSSI (161 aa)). Residue 292–299 (GDVGSGKT) coordinates ATP. Residues 392–395 (DEQH) carry the DEAH box motif. In terms of domain architecture, Helicase C-terminal spans 462–618 (VLMQMTSELK…GFELSERDLE (157 aa)).

It belongs to the helicase family. RecG subfamily. Monomer.

The enzyme catalyses Couples ATP hydrolysis with the unwinding of duplex DNA by translocating in the 3'-5' direction.. It catalyses the reaction ATP + H2O = ADP + phosphate + H(+). Its function is as follows. Plays a critical role in recombination and DNA repair. Helps process Holliday junction intermediates to mature products by catalyzing branch migration. Has replication fork regression activity, unwinds stalled or blocked replication forks to make a HJ that can be resolved. Has a DNA unwinding activity characteristic of a DNA helicase with 3'-5' polarity. In Staphylococcus aureus (strain NCTC 8325 / PS 47), this protein is ATP-dependent DNA helicase RecG.